Consider the following 426-residue polypeptide: 3-isopropylmalate dehydratase large subunit (426 aa).

Residues Cys307, Cys367, and Cys370 each contribute to the [4Fe-4S] cluster site.

It belongs to the aconitase/IPM isomerase family. LeuC type 2 subfamily. Heterodimer of LeuC and LeuD. [4Fe-4S] cluster is required as a cofactor.

The catalysed reaction is (2R,3S)-3-isopropylmalate = (2S)-2-isopropylmalate. It functions in the pathway amino-acid biosynthesis; L-leucine biosynthesis; L-leucine from 3-methyl-2-oxobutanoate: step 2/4. Catalyzes the isomerization between 2-isopropylmalate and 3-isopropylmalate, via the formation of 2-isopropylmaleate. This chain is 3-isopropylmalate dehydratase large subunit, found in Sulfurovum sp. (strain NBC37-1).